An 85-amino-acid chain; its full sequence is MAHKKAGGSTRNGRDSEAKRLGVKMYGGQAIKAGNIIVRQRGTQFHAGYGVGMGKDHTLFAKVEGVVKFEVKGAFGRRYVSVVAA.

This sequence belongs to the bacterial ribosomal protein bL27 family.

The sequence is that of Large ribosomal subunit protein bL27 from Stutzerimonas stutzeri (strain A1501) (Pseudomonas stutzeri).